The primary structure comprises 327 residues: Glycoprotein integral membrane protein 1 (327 aa).

The signal sequence occupies residues 1-23 (MEGGLSAPLSVRLLLFIALPAAG). Over 24–259 (WLTTNAPRPP…LCRFWSSVVP (236 aa)) the chain is Extracellular. Residues asparagine 44, asparagine 62, and asparagine 146 are each glycosylated (N-linked (GlcNAc...) asparagine). Residues 260–280 (VLFMFLDVMVVGVLGAAGVIA) form a helical membrane-spanning segment. Over 281–327 (VLKLLFPVCENKGILQVDKMNGISVPIILYPDGSEKTAQKLTDKTDI) the chain is Cytoplasmic.

It is found in the membrane. The chain is Glycoprotein integral membrane protein 1 (Ginm1) from Mus musculus (Mouse).